The sequence spans 173 residues: Inorganic pyrophosphatase (173 aa).

Substrate-binding residues include K29, R43, and Y55. Residues D65, D70, and D102 each contribute to the Mg(2+) site. Y141 lines the substrate pocket.

It belongs to the PPase family. In terms of assembly, homohexamer. The cofactor is Mg(2+).

It localises to the cytoplasm. The catalysed reaction is diphosphate + H2O = 2 phosphate + H(+). In terms of biological role, catalyzes the hydrolysis of inorganic pyrophosphate (PPi) forming two phosphate ions. This chain is Inorganic pyrophosphatase, found in Rickettsia conorii (strain ATCC VR-613 / Malish 7).